The primary structure comprises 387 residues: NADPH-dependent aldehyde reductase YqhD (387 aa).

NADP(+) contacts are provided by Gly-38, Ser-40, Asn-68, Gly-95, Ser-96, Asp-99, Thr-138, Asn-147, Gly-149, Lys-160, Tyr-179, and Thr-182. Residues Asp-194, His-198, His-267, and His-281 each contribute to the Zn(2+) site.

This sequence belongs to the iron-containing alcohol dehydrogenase family. Homodimer. The crystals contain two dimers in the asymmetric unit. Requires Zn(2+) as cofactor.

The catalysed reaction is a primary alcohol + NADP(+) = an aldehyde + NADPH + H(+). It catalyses the reaction butan-1-ol + NADP(+) = butanal + NADPH + H(+). It carries out the reaction 1-propanol + NADP(+) = propanal + NADPH + H(+). The enzyme catalyses allyl alcohol + NADP(+) = acrolein + NADPH + H(+). Exhibits NADPH-dependent reductase activity for a broad range of short-chain aldehydes. Shows highest catalytic efficiency toward butanal, propanal and the highly toxic aldehydes acrolein and malondialdehyde (MDA), which are produced mainly during lipid peroxidation. Mediates resistance to reactive oxygen species (ROS) elicitors, such as paraquat and potassium tellurite, probably by protecting the cell against the toxic effects of reactive aldehydes derived from membrane lipid peroxidation. Also acts, with lower efficiency, on acetaldehyde, glyceraldehyde, glycolaldehyde, methylglyoxal, glyoxal and hydroxyacetone. Could be involved in glyoxal metabolism, by catalyzing the reduction of glyoxal to glycolaldehyde, and further to 1,2-ethandiol. Catalyzes the reduction of isobutyraldehyde (2-methylpropanal) to isobutanol, and probably contributes to the production of isobutanol. Can probably catalyze the reduction of glutaraldehyde, a widely used biocide, to 1,5-pentanediol, which is non-toxic. Overexpression of YqhD protects the cells against glutaraldehyde toxicity. Can catalyze in vitro the NADPH-dependent reduction of furfural, a natural product of lignocellulosic decomposition, to the less toxic product, furfuryl alcohol. However, it is unlikely that furfural is a physiological substrate. Its function is as follows. In contrast, Sulzenbacher et al. detected significant activities only in the presence of alcohol and NADP(+). They reported in vitro NADP(+)-dependent alcohol dehydrogenase (ADH) activity towards various alcohols, with a preference for alcohols longer than C(3), but the affinity for the substrates is poor, suggesting that these compounds are not the physiological substrates. Perez et al. did not detect dehydrogenase activity with short and medium chain alcohols such as methanol, ethanol, propanol, butanol or isopropanol. In Escherichia coli (strain K12), this protein is NADPH-dependent aldehyde reductase YqhD (yqhD).